The following is a 269-amino-acid chain: Tryptophan synthase alpha chain (269 aa).

Residues Glu-49 and Asp-60 each act as proton acceptor in the active site.

Belongs to the TrpA family. As to quaternary structure, tetramer of two alpha and two beta chains.

The catalysed reaction is (1S,2R)-1-C-(indol-3-yl)glycerol 3-phosphate + L-serine = D-glyceraldehyde 3-phosphate + L-tryptophan + H2O. It participates in amino-acid biosynthesis; L-tryptophan biosynthesis; L-tryptophan from chorismate: step 5/5. In terms of biological role, the alpha subunit is responsible for the aldol cleavage of indoleglycerol phosphate to indole and glyceraldehyde 3-phosphate. The protein is Tryptophan synthase alpha chain of Delftia acidovorans (strain DSM 14801 / SPH-1).